The following is a 236-amino-acid chain: Calcium-binding lectin RapA2 (236 aa).

It localises to the secreted. In terms of biological role, interacts specifically in a calcium-dependent manner with the acidic exopolysaccharide (EPS) and capsular polysaccharide produced by R.leguminosarum. Could be involved in the development of the biofilm matrix made of EPS. The protein is Calcium-binding lectin RapA2 of Rhizobium johnstonii (strain DSM 114642 / LMG 32736 / 3841) (Rhizobium leguminosarum bv. viciae).